Reading from the N-terminus, the 327-residue chain is Lipoyl synthase (327 aa).

Residues cysteine 72, cysteine 77, cysteine 83, cysteine 98, cysteine 102, cysteine 105, and serine 313 each coordinate [4Fe-4S] cluster. One can recognise a Radical SAM core domain in the interval 83 to 302 (CWSHGTATIM…RKVGLEKGFL (220 aa)).

It belongs to the radical SAM superfamily. Lipoyl synthase family. Requires [4Fe-4S] cluster as cofactor.

Its subcellular location is the cytoplasm. The enzyme catalyses [[Fe-S] cluster scaffold protein carrying a second [4Fe-4S](2+) cluster] + N(6)-octanoyl-L-lysyl-[protein] + 2 oxidized [2Fe-2S]-[ferredoxin] + 2 S-adenosyl-L-methionine + 4 H(+) = [[Fe-S] cluster scaffold protein] + N(6)-[(R)-dihydrolipoyl]-L-lysyl-[protein] + 4 Fe(3+) + 2 hydrogen sulfide + 2 5'-deoxyadenosine + 2 L-methionine + 2 reduced [2Fe-2S]-[ferredoxin]. It functions in the pathway protein modification; protein lipoylation via endogenous pathway; protein N(6)-(lipoyl)lysine from octanoyl-[acyl-carrier-protein]: step 2/2. Catalyzes the radical-mediated insertion of two sulfur atoms into the C-6 and C-8 positions of the octanoyl moiety bound to the lipoyl domains of lipoate-dependent enzymes, thereby converting the octanoylated domains into lipoylated derivatives. This is Lipoyl synthase from Francisella tularensis subsp. novicida (strain U112).